A 116-amino-acid chain; its full sequence is Ly-6/neurotoxin-like protein 1 (116 aa).

The signal sequence occupies residues 1–20 (MTPLLTLFLVALIGLPLAQA). The UPAR/Ly6 domain occupies 21-105 (LDCHVCAYNG…FAAPATLALA (85 aa)). Cystine bridges form between Cys-23-Cys-46, Cys-26-Cys-33, Cys-39-Cys-64, Cys-68-Cys-85, and Cys-86-Cys-91. A lipid anchor (GPI-anchor amidated asparagine) is attached at Asn-92. A propeptide spans 93–116 (GAGFAAPATLALAPILLATLWGLL) (removed in mature form).

As to quaternary structure, interacts with nAChRs containing alpha-4:beta-2 (CHRNA4:CHRNB2) and alpha-7 (CHRNA7) subunits. Interacts with CHRNA4 probably in the endoplasmic reticulum prior to nAChR pentameric assembly. Interacts with KCNA2/Potassium voltage-gated channel subfamily A member 2.

The protein localises to the cell membrane. It is found in the cell projection. It localises to the dendrite. Its subcellular location is the endoplasmic reticulum. In terms of biological role, acts in different tissues through interaction to nicotinic acetylcholine receptors (nAChRs). The proposed role as modulator of nAChR activity seems to be dependent on the nAChR subtype and stoichiometry, and to involve an effect on nAChR trafficking and its cell surface expression, and on single channel properties of the nAChR inserted in the plasma membrane. Modulates functional properties of nicotinic acetylcholine receptors (nAChRs) to prevent excessive excitation, and hence neurodegeneration. Enhances desensitization by increasing both the rate and extent of desensitization of alpha-4:beta-2-containing nAChRs and slowing recovery from desensitization. Promotes large amplitude ACh-evoked currents through alpha-4:beta-2 nAChRs. Is involved in regulation of the nAChR pentameric assembly in the endoplasmic reticulum. Shifts stoichiometry from high sensitivity alpha-4(2):beta-2(3) to low sensitivity alpha-4(3):beta-2(2) nAChR. In vitro modulates alpha-3:beta-4-containing nAChRs. Reduces cell surface expression of (alpha-3:beta-4)(2):beta-4 and (alpha-3:beta-4)(2):alpha-5 nAChRs suggesting an interaction with nAChR alpha-3(-):(+)beta-4 subunit interfaces and an allosteric mode. Corresponding single channel effects characterized by decreased unitary conductance, altered burst proportions and enhanced desensitization/inactivation seem to depend on nAChR alpha:alpha subunit interfaces and are greater in (alpha-3:beta-2)(2):alpha-3 when compared to (alpha-3:beta-2)(2):alpha-5 nAChRs. Prevents plasticity in the primary visual cortex late in life. The protein is Ly-6/neurotoxin-like protein 1 of Saimiri boliviensis boliviensis (Bolivian squirrel monkey).